The following is a 269-amino-acid chain: Putative pyruvate, phosphate dikinase regulatory protein (269 aa).

Position 147–154 (glycine 147–threonine 154) interacts with ADP.

This sequence belongs to the pyruvate, phosphate/water dikinase regulatory protein family. PDRP subfamily.

It catalyses the reaction N(tele)-phospho-L-histidyl/L-threonyl-[pyruvate, phosphate dikinase] + ADP = N(tele)-phospho-L-histidyl/O-phospho-L-threonyl-[pyruvate, phosphate dikinase] + AMP + H(+). It carries out the reaction N(tele)-phospho-L-histidyl/O-phospho-L-threonyl-[pyruvate, phosphate dikinase] + phosphate + H(+) = N(tele)-phospho-L-histidyl/L-threonyl-[pyruvate, phosphate dikinase] + diphosphate. Functionally, bifunctional serine/threonine kinase and phosphorylase involved in the regulation of the pyruvate, phosphate dikinase (PPDK) by catalyzing its phosphorylation/dephosphorylation. The polypeptide is Putative pyruvate, phosphate dikinase regulatory protein (Geotalea uraniireducens (strain Rf4) (Geobacter uraniireducens)).